The chain runs to 654 residues: Kelch-like protein 13 (654 aa).

The region spanning 91–160 (CDVTLMPGDT…IYTAKLSLNM (70 aa)) is the BTB domain. Residues 195–296 (CVEVGRIANT…TPQELINYVQ (102 aa)) form the BACK domain. Kelch repeat units follow at residues 340–388 (RLVT…VIGN), 389–440 (FLYV…ALKG), 441–487 (FLYA…VYGG), 489–534 (MYIS…TVGD), 536–586 (LYVI…VFEN), and 587–635 (KIYV…TLTV).

In terms of assembly, component of the BCR(KLHL9-KLHL13) E3 ubiquitin ligase complex, at least composed of CUL3, KLHL9, KLHL13 and RBX1. Interacts with AURKB.

The protein operates within protein modification; protein ubiquitination. Its function is as follows. Substrate-specific adapter of a BCR (BTB-CUL3-RBX1) E3 ubiquitin-protein ligase complex required for mitotic progression and cytokinesis. The BCR(KLHL9-KLHL13) E3 ubiquitin ligase complex mediates the ubiquitination of AURKB and controls the dynamic behavior of AURKB on mitotic chromosomes and thereby coordinates faithful mitotic progression and completion of cytokinesis. The chain is Kelch-like protein 13 (Klhl13) from Mus musculus (Mouse).